The primary structure comprises 296 residues: Ribonuclease HIII (296 aa).

An RNase H type-2 domain is found at 80–296 (LALIGSDEVG…NTKKAYQRLK (217 aa)). A divalent metal cation is bound by residues aspartate 86, glutamate 87, and aspartate 191.

Belongs to the RNase HII family. RnhC subfamily. The cofactor is Mn(2+). Mg(2+) is required as a cofactor.

It localises to the cytoplasm. The catalysed reaction is Endonucleolytic cleavage to 5'-phosphomonoester.. In terms of biological role, endonuclease that specifically degrades the RNA of RNA-DNA hybrids. The chain is Ribonuclease HIII from Streptococcus thermophilus (strain ATCC BAA-250 / LMG 18311).